The chain runs to 600 residues: Aspartate--tRNA(Asp/Asn) ligase (600 aa).

E174 provides a ligand contact to L-aspartate. Residues Q198–K201 form an aspartate region. R220 contributes to the L-aspartate binding site. ATP contacts are provided by residues R220 to E222 and Q229. H457 is a binding site for L-aspartate. Position 491 (E491) interacts with ATP. R498 contacts L-aspartate. G543 to R546 lines the ATP pocket.

Belongs to the class-II aminoacyl-tRNA synthetase family. Type 1 subfamily. Homodimer.

It is found in the cytoplasm. It catalyses the reaction tRNA(Asx) + L-aspartate + ATP = L-aspartyl-tRNA(Asx) + AMP + diphosphate. Functionally, aspartyl-tRNA synthetase with relaxed tRNA specificity since it is able to aspartylate not only its cognate tRNA(Asp) but also tRNA(Asn). Reaction proceeds in two steps: L-aspartate is first activated by ATP to form Asp-AMP and then transferred to the acceptor end of tRNA(Asp/Asn). The chain is Aspartate--tRNA(Asp/Asn) ligase from Burkholderia pseudomallei (strain 668).